A 364-amino-acid polypeptide reads, in one-letter code: MANKTILFNKHLESNAKMVDFHGWDMPLNYGSQIEEHNAVRQDAGMFDVSHMTVVDVIGNDACAFLRKLLANDVAKLKVPGKALYGGMLDENAGVIDDLITYYLTDTNYRVVVNSATREKDLAWIAKQSQGFDVTVTERPELAMIAVQGPNAKAKAAAVLSAEQNAAIEGMKPFFGKQAGSLFIATTGYTGEAGYEIIVPENEAEAMWQALLDQGVKPCGLGARDTLRLEAGMNLYGLDMDETINPLAANMGWTIAWEPSDRDFIGRKALETLRDAGTDKLVGLVMEEKGVLRHDMPVFFTDSAGVEHQGVITSGTFSPTLGYSIAMARVPNSIGDTAEVEMRKKRVAVRVVAPNFVRNGKQAF.

Belongs to the GcvT family. In terms of assembly, the glycine cleavage system is composed of four proteins: P, T, L and H.

The enzyme catalyses N(6)-[(R)-S(8)-aminomethyldihydrolipoyl]-L-lysyl-[protein] + (6S)-5,6,7,8-tetrahydrofolate = N(6)-[(R)-dihydrolipoyl]-L-lysyl-[protein] + (6R)-5,10-methylene-5,6,7,8-tetrahydrofolate + NH4(+). In terms of biological role, the glycine cleavage system catalyzes the degradation of glycine. The sequence is that of Aminomethyltransferase from Shewanella baltica (strain OS155 / ATCC BAA-1091).